We begin with the raw amino-acid sequence, 177 residues long: MGVSTAAYDAGPDKEHATQLLNNELQDKGFLLTSTEDIINWARTGSLHWMTFGLACCAVEMMHTSMPRYDAERFGIAPRASPRQSDVMIVAGTLTNKMAPALRKVYDQMPEPRYVISMGSCANGGGYYHYSYSVVRGCDRVVPVDIYVPGCPPTAEALLYGLLQLQRKIRRTGTIVR.

[4Fe-4S] cluster is bound by residues C56, C57, C121, and C151.

It belongs to the complex I 20 kDa subunit family. As to quaternary structure, NDH-1 is composed of 14 different subunits. Subunits NuoB, C, D, E, F, and G constitute the peripheral sector of the complex. It depends on [4Fe-4S] cluster as a cofactor.

It is found in the cell inner membrane. It catalyses the reaction a quinone + NADH + 5 H(+)(in) = a quinol + NAD(+) + 4 H(+)(out). In terms of biological role, NDH-1 shuttles electrons from NADH, via FMN and iron-sulfur (Fe-S) centers, to quinones in the respiratory chain. Couples the redox reaction to proton translocation (for every two electrons transferred, four hydrogen ions are translocated across the cytoplasmic membrane), and thus conserves the redox energy in a proton gradient. This Dinoroseobacter shibae (strain DSM 16493 / NCIMB 14021 / DFL 12) protein is NADH-quinone oxidoreductase subunit B.